A 264-amino-acid chain; its full sequence is Thymidylate synthase (264 aa).

DUMP is bound at residue Arg-21. His-51 provides a ligand contact to (6R)-5,10-methylene-5,6,7,8-tetrahydrofolate. 126–127 provides a ligand contact to dUMP; the sequence is RR. The active-site Nucleophile is the Cys-146. Residues 166-169, Asn-177, and 207-209 contribute to the dUMP site; these read RSCD and HLY. Position 169 (Asp-169) interacts with (6R)-5,10-methylene-5,6,7,8-tetrahydrofolate. Ala-263 serves as a coordination point for (6R)-5,10-methylene-5,6,7,8-tetrahydrofolate.

Belongs to the thymidylate synthase family. Bacterial-type ThyA subfamily. In terms of assembly, homodimer.

The protein localises to the cytoplasm. It catalyses the reaction dUMP + (6R)-5,10-methylene-5,6,7,8-tetrahydrofolate = 7,8-dihydrofolate + dTMP. The protein operates within pyrimidine metabolism; dTTP biosynthesis. Functionally, catalyzes the reductive methylation of 2'-deoxyuridine-5'-monophosphate (dUMP) to 2'-deoxythymidine-5'-monophosphate (dTMP) while utilizing 5,10-methylenetetrahydrofolate (mTHF) as the methyl donor and reductant in the reaction, yielding dihydrofolate (DHF) as a by-product. This enzymatic reaction provides an intracellular de novo source of dTMP, an essential precursor for DNA biosynthesis. This is Thymidylate synthase from Shewanella amazonensis (strain ATCC BAA-1098 / SB2B).